Here is a 418-residue protein sequence, read N- to C-terminus: Serine hydroxymethyltransferase (418 aa).

Residues leucine 118 and glycine 122 to leucine 124 each bind (6S)-5,6,7,8-tetrahydrofolate. Residue lysine 227 is modified to N6-(pyridoxal phosphate)lysine. (6S)-5,6,7,8-tetrahydrofolate is bound at residue glutamate 242.

It belongs to the SHMT family. Homodimer. Pyridoxal 5'-phosphate serves as cofactor.

The protein resides in the cytoplasm. The catalysed reaction is (6R)-5,10-methylene-5,6,7,8-tetrahydrofolate + glycine + H2O = (6S)-5,6,7,8-tetrahydrofolate + L-serine. Its pathway is one-carbon metabolism; tetrahydrofolate interconversion. The protein operates within amino-acid biosynthesis; glycine biosynthesis; glycine from L-serine: step 1/1. Functionally, catalyzes the reversible interconversion of serine and glycine with tetrahydrofolate (THF) serving as the one-carbon carrier. This reaction serves as the major source of one-carbon groups required for the biosynthesis of purines, thymidylate, methionine, and other important biomolecules. Also exhibits THF-independent aldolase activity toward beta-hydroxyamino acids, producing glycine and aldehydes, via a retro-aldol mechanism. The polypeptide is Serine hydroxymethyltransferase (Chloroflexus aggregans (strain MD-66 / DSM 9485)).